A 313-amino-acid chain; its full sequence is Probable cell division protein WhiA (313 aa).

The H-T-H motif DNA-binding region spans 276–309 (SLKELGEMLHPKLGKSGVNHRLRKLDEIAERIRK).

The protein belongs to the WhiA family.

Functionally, involved in cell division and chromosome segregation. The chain is Probable cell division protein WhiA from Ruminiclostridium cellulolyticum (strain ATCC 35319 / DSM 5812 / JCM 6584 / H10) (Clostridium cellulolyticum).